Reading from the N-terminus, the 264-residue chain is Thymidylate synthase (264 aa).

Arg21 is a binding site for dUMP. Position 51 (His51) interacts with (6R)-5,10-methylene-5,6,7,8-tetrahydrofolate. DUMP is bound at residue 126-127 (RR). Cys146 acts as the Nucleophile in catalysis. DUMP is bound by residues 166–169 (RSAD), Asn177, and 207–209 (HIY). Residue Asp169 coordinates (6R)-5,10-methylene-5,6,7,8-tetrahydrofolate. (6R)-5,10-methylene-5,6,7,8-tetrahydrofolate is bound at residue Ala263.

It belongs to the thymidylate synthase family. Bacterial-type ThyA subfamily. In terms of assembly, homodimer.

The protein resides in the cytoplasm. The catalysed reaction is dUMP + (6R)-5,10-methylene-5,6,7,8-tetrahydrofolate = 7,8-dihydrofolate + dTMP. Its pathway is pyrimidine metabolism; dTTP biosynthesis. Functionally, catalyzes the reductive methylation of 2'-deoxyuridine-5'-monophosphate (dUMP) to 2'-deoxythymidine-5'-monophosphate (dTMP) while utilizing 5,10-methylenetetrahydrofolate (mTHF) as the methyl donor and reductant in the reaction, yielding dihydrofolate (DHF) as a by-product. This enzymatic reaction provides an intracellular de novo source of dTMP, an essential precursor for DNA biosynthesis. This is Thymidylate synthase from Agrobacterium fabrum (strain C58 / ATCC 33970) (Agrobacterium tumefaciens (strain C58)).